Reading from the N-terminus, the 249-residue chain is Phosphatidylglycerol--prolipoprotein diacylglyceryl transferase (249 aa).

Helical transmembrane passes span 11–31 (LKIY…VILL), 49–69 (AIVG…IVDI), 82–102 (LGNG…VYLY), 116–136 (LVVP…FLAG), 163–183 (LHPT…FLLW), 192–212 (GRVF…VEFL), and 223–243 (LSTS…VFNI). R129 serves as a coordination point for a 1,2-diacyl-sn-glycero-3-phospho-(1'-sn-glycerol).

This sequence belongs to the Lgt family.

It is found in the cell membrane. It carries out the reaction L-cysteinyl-[prolipoprotein] + a 1,2-diacyl-sn-glycero-3-phospho-(1'-sn-glycerol) = an S-1,2-diacyl-sn-glyceryl-L-cysteinyl-[prolipoprotein] + sn-glycerol 1-phosphate + H(+). The protein operates within protein modification; lipoprotein biosynthesis (diacylglyceryl transfer). Functionally, catalyzes the transfer of the diacylglyceryl group from phosphatidylglycerol to the sulfhydryl group of the N-terminal cysteine of a prolipoprotein, the first step in the formation of mature lipoproteins. This chain is Phosphatidylglycerol--prolipoprotein diacylglyceryl transferase, found in Clostridium tetani (strain Massachusetts / E88).